The primary structure comprises 95 residues: Toxin HigB-1 (95 aa).

Functionally, toxic component of a type II toxin-antitoxin (TA) system. Inhibits translation by cleavage of mRNA. The sequence is that of Toxin HigB-1 (higB-1) from Vibrio cholerae serotype O1 (strain ATCC 39315 / El Tor Inaba N16961).